The chain runs to 756 residues: Sodium/hydrogen exchanger 8 (756 aa).

The Extracellular portion of the chain corresponds to 1 to 31 (MTSIIGAALPYKSPEKAIASSSYSAENDSSP). N-linked (GlcNAc...) asparagine glycosylation occurs at asparagine 27. The helical transmembrane segment at 32 to 52 (VDAVIFAGTSLVLGTACRYLF) threads the bilayer. At 53–56 (NGTR) the chain is on the cytoplasmic side. A helical membrane pass occupies residues 57-77 (VPYTVVLLVIGIFLGSLEYGT). Residues 78–89 (KHNLGKLGHGIR) are Extracellular-facing. The chain crosses the membrane as a helical span at residues 90–110 (IWNGINPDLLLAVFLPVLLFE). At 111-125 (SSFSMDVHQIKRCMG) the chain is on the cytoplasmic side. A helical membrane pass occupies residues 126–146 (QMVLLAGPGVLISTFCLGALI). The Extracellular portion of the chain corresponds to 147 to 157 (KLTFPYNWDWK). Residues 158-178 (TSLLLGGLLGATDPVAVVALL) form a helical membrane-spanning segment. The Cytoplasmic portion of the chain corresponds to 179–194 (KELGASKKMTTLIDGE). The chain crosses the membrane as a helical span at residues 195 to 215 (SLMNDGVSVVVFQLFFKMVMG). The Extracellular portion of the chain corresponds to 216–225 (HNSDWGSIIK). Residues 226 to 248 (FLVQNSFGAVGIGLAFGIASVFW) form a helical membrane-spanning segment. Over 249–251 (LKF) the chain is Cytoplasmic. A helical transmembrane segment spans residues 252–271 (IFNDTVAQITVTLSASYFAY). Over 272–276 (YTAQE) the chain is Extracellular. Residues 277–297 (WAGVSGILTVMILGMFFAAFA) traverse the membrane as a helical segment. The Cytoplasmic portion of the chain corresponds to 298-311 (RTAFKGDSHQSLHH). The helical transmembrane segment at 312 to 332 (FWEMAAYIANTLVFMLSGVII) threads the bilayer. Residues 333 to 350 (AESVLSGQTISYKGNSWS) are Extracellular-facing. The helical transmembrane segment at 351 to 371 (FLFLLYLYVQLSRCVVVGVLY) threads the bilayer. Residues 372–385 (PLLCRSGYGLDWKE) are Cytoplasmic-facing. A helical membrane pass occupies residues 386-406 (SIILTWSGLRGAVSLSLALSV). The Extracellular segment spans residues 407 to 422 (KQSSGNSYLSSDTGTR). The helical transmembrane segment at 423–443 (FLFLTGGIVFLTLVVNGSTTQ) threads the bilayer. The Cytoplasmic portion of the chain corresponds to 444-756 (LLLHLLRMDT…RSLAIGETDA (313 aa)).

This sequence belongs to the monovalent cation:proton antiporter 1 (CPA1) transporter (TC 2.A.36) family.

It is found in the cell membrane. It catalyses the reaction Na(+)(in) + H(+)(out) = Na(+)(out) + H(+)(in). The enzyme catalyses K(+)(in) + H(+)(out) = K(+)(out) + H(+)(in). Functionally, may act in low affinity electroneutral exchange of protons for cations such as Na(+) or K(+) across membranes. May also exchange Li(+) and Cs(+) with a lower affinity. This Arabidopsis thaliana (Mouse-ear cress) protein is Sodium/hydrogen exchanger 8 (NHX8).